The chain runs to 607 residues: Autophagy-related protein 22-2 (607 aa).

The interval 9–31 (FQSPSPDEGVQQRPPRYVGEDTT) is disordered. The helical transmembrane segment at 44-64 (YGIAAEVFAVCGVGSFLPLTL) threads the bilayer. 2 N-linked (GlcNAc...) asparagine glycosylation sites follow: N88 and N91. 3 consecutive transmembrane segments (helical) span residues 111–131 (SFAM…LISF), 143–160 (TLLM…MLFV), and 161–178 (FIAP…VVGV). Positions 203-263 (QEGKADDGTE…GMGTKAPLSS (61 aa)) are disordered. An N-linked (GlcNAc...) asparagine glycan is attached at N235. 8 consecutive transmembrane segments (helical) span residues 277–297 (GIGL…IMLL), 310–330 (TLPM…FTLV), 381–401 (VLIF…VSGT), 415–435 (PLIG…AFLW), 450–470 (IILC…AYIP), 484–504 (WEIF…ASYC), 521–543 (YALY…GGIV), and 552–572 (GFFF…MVNA). The interval 585–607 (TLGKSHGGPAEDAQEAEGLLARE) is disordered.

Belongs to the ATG22 family.

Its subcellular location is the vacuole membrane. Its function is as follows. Vacuolar effluxer which mediate the efflux of amino acids resulting from autophagic degradation. The release of autophagic amino acids allows the maintenance of protein synthesis and viability during nitrogen starvation. This Penicillium rubens (strain ATCC 28089 / DSM 1075 / NRRL 1951 / Wisconsin 54-1255) (Penicillium chrysogenum) protein is Autophagy-related protein 22-2 (atg22-2).